The sequence spans 318 residues: Protein FdhE homolog (318 aa).

This sequence belongs to the FdhE family.

It localises to the cytoplasm. Necessary for formate dehydrogenase activity. This Pseudomonas putida (strain ATCC 47054 / DSM 6125 / CFBP 8728 / NCIMB 11950 / KT2440) protein is Protein FdhE homolog.